The primary structure comprises 100 residues: NADH-quinone oxidoreductase subunit K (100 aa).

The next 3 membrane-spanning stretches (helical) occupy residues 4–24, 29–49, and 63–83; these read ITYY…GVLV, LVVF…FVAF, and FFVI…VIAV.

It belongs to the complex I subunit 4L family. In terms of assembly, NDH-1 is composed of 14 different subunits. Subunits NuoA, H, J, K, L, M, N constitute the membrane sector of the complex.

The protein localises to the cell inner membrane. It catalyses the reaction a quinone + NADH + 5 H(+)(in) = a quinol + NAD(+) + 4 H(+)(out). Functionally, NDH-1 shuttles electrons from NADH, via FMN and iron-sulfur (Fe-S) centers, to quinones in the respiratory chain. The immediate electron acceptor for the enzyme in this species is believed to be ubiquinone. Couples the redox reaction to proton translocation (for every two electrons transferred, four hydrogen ions are translocated across the cytoplasmic membrane), and thus conserves the redox energy in a proton gradient. The sequence is that of NADH-quinone oxidoreductase subunit K from Myxococcus xanthus (strain DK1622).